Reading from the N-terminus, the 905-residue chain is Chitin synthase 3B (905 aa).

Residues 1 to 10 (MAYNGRDQEY) show a composition bias toward basic and acidic residues. The disordered stretch occupies residues 1 to 136 (MAYNGRDQEY…GGGGGLGRSK (136 aa)). A compositionally biased stretch (gly residues) spans 81-93 (GPTGYGDTGGSFG). A glycan (N-linked (GlcNAc...) asparagine) is linked at N536. The chain crosses the membrane as a helical span at residues 562–584 (MFFLHIQLIYTTLNTMFAWFSLG). A glycan (N-linked (GlcNAc...) asparagine) is linked at N601. The next 6 helical transmembrane spans lie at 618–638 (IVNALLQYLYLAFVMLQFILA), 653–673 (SFMVFGLIQGYILVLSAYLVV), 705–725 (VILVALITIYGLNFIASFMYL), 733–753 (SFPYYLVLMSTYINILMVYAF), 832–852 (TGLVVCWLFGNILLIVCITST), and 873–893 (FLLYATAVLSLVRFFGFLWFL).

It belongs to the chitin synthase family. Class III subfamily.

It localises to the cell membrane. The catalysed reaction is [(1-&gt;4)-N-acetyl-beta-D-glucosaminyl](n) + UDP-N-acetyl-alpha-D-glucosamine = [(1-&gt;4)-N-acetyl-beta-D-glucosaminyl](n+1) + UDP + H(+). Its function is as follows. Polymerizes chitin, a structural polymer of the cell wall and septum, by transferring the sugar moiety of UDP-GlcNAc to the non-reducing end of the growing chitin polymer. Plays essential functions in fungal survival and host infection. This is Chitin synthase 3B from Gibberella zeae (strain ATCC MYA-4620 / CBS 123657 / FGSC 9075 / NRRL 31084 / PH-1) (Wheat head blight fungus).